The sequence spans 145 residues: Methylglyoxal synthase (145 aa).

Residues 1 to 145 (MNSKKKIALV…YYQKIRKDNF (145 aa)) form the MGS-like domain. Substrate-binding positions include His-12, Lys-16, 38–41 (TGTT), and 58–59 (SG). The active-site Proton donor/acceptor is Asp-64. Residue His-91 participates in substrate binding.

Belongs to the methylglyoxal synthase family.

The catalysed reaction is dihydroxyacetone phosphate = methylglyoxal + phosphate. Functionally, catalyzes the formation of methylglyoxal from dihydroxyacetone phosphate. This Clostridium acetobutylicum (strain ATCC 824 / DSM 792 / JCM 1419 / IAM 19013 / LMG 5710 / NBRC 13948 / NRRL B-527 / VKM B-1787 / 2291 / W) protein is Methylglyoxal synthase.